The following is a 608-amino-acid chain: Threonine--tRNA ligase (608 aa).

Residues Met1–Asp143 form an editing domain region. Catalytic regions lie at residues Pro194–Pro490 and Lys195–Pro490. The Zn(2+) site is built by Cys287, His338, and His459.

It belongs to the class-II aminoacyl-tRNA synthetase family. As to quaternary structure, homodimer. The cofactor is Zn(2+).

Its subcellular location is the cytoplasm. It carries out the reaction tRNA(Thr) + L-threonine + ATP = L-threonyl-tRNA(Thr) + AMP + diphosphate + H(+). Its function is as follows. Catalyzes the attachment of threonine to tRNA(Thr) in a two-step reaction: L-threonine is first activated by ATP to form Thr-AMP and then transferred to the acceptor end of tRNA(Thr). Also edits incorrectly charged L-seryl-tRNA(Thr). The chain is Threonine--tRNA ligase from Pyrobaculum aerophilum (strain ATCC 51768 / DSM 7523 / JCM 9630 / CIP 104966 / NBRC 100827 / IM2).